The sequence spans 100 residues: Large ribosomal subunit protein bL21 (100 aa).

This sequence belongs to the bacterial ribosomal protein bL21 family. As to quaternary structure, part of the 50S ribosomal subunit. Contacts protein L20.

In terms of biological role, this protein binds to 23S rRNA in the presence of protein L20. This is Large ribosomal subunit protein bL21 from Mycoplasma genitalium (strain ATCC 33530 / DSM 19775 / NCTC 10195 / G37) (Mycoplasmoides genitalium).